The sequence spans 452 residues: Scaffold protein ILK (452 aa).

Met1 carries the N-acetylmethionine modification. ANK repeat units follow at residues 2 to 30 (DDIFTQCREGNAVAVRLWLDNTENDLNQG), 31 to 63 (DDHGFSPLHWACREGRSAVVEMLIMRGARINVM), 64 to 96 (NRGDDTPLHLAASHGHRDIVQKLLQYKADINAV), 97 to 129 (NEHGNVPLHYACFWGQDQVAEDLVANGALVSIC), and 130 to 174 (NKYG…GTTR). Positions 33 to 139 (HGFSPLHWAC…NKYGEMPVDK (107 aa)) are interaction with LIMS1. A Phosphothreonine modification is found at Thr173. The tract at residues 180-212 (GTLNKHSGIDFKQLNFLAKLNENHSGELWKGRW) is PH-like; mediates interaction with TGFB1I1. A Phosphoserine modification is found at Ser186. Residues 193 to 446 (LNFLAKLNEN…PKFDMIVPIL (254 aa)) enclose the Protein kinase domain. ATP-binding residues include Asn200, Asn202, His203, and Ser204. Ser246 bears the Phosphoserine mark. ATP is bound by residues His270, Met272, and Asn279. Mg(2+) is bound at residue Asp339. Residue Lys341 coordinates ATP. A Nuclear localization signal motif is present at residues 363–371 (KKPEDTNRR). N6-acetyllysine is present on Lys426.

The protein belongs to the protein kinase superfamily. TKL Ser/Thr protein kinase family. Component of the heterotrimeric IPP (ILK-PINCH-PARVIN) complex composed of ILK, LIMS1/PINCH and PARVA; the complex binds to F-actin via the C-terminal tail of LIMS1 and the N-terminal region of PARVA, promoting F-actin filament bundling. Formation of the IPP complex is dependent on protein kinase C and precedes integrin-mediated cell adhesion and spreading. ILK also interacts with LIMS2/PINCH2 and with PARVB and PARVG which may substitute for LIMS1 and PARVA in the IPP complex; PARVA and PARVB compete for the same binding site. Interaction with PARVG promotes the establishment of cell polarity required for leukocyte migration. Interacts with the cytoplasmic domain of integrin ITGB1 and may also interact with integrins ITGB2, ITGB3 and/or ITGB5. Interacts probably also with TGFB1I1. Interacts (via ANK repeats) with EPHA1 (via SAM domain); stimulated by EFNA1 but independent of the kinase activity of EPHA1. Interacts with FERMT2. Interacts with LIMD2; leading to activate the protein kinase activity. Interacts with PXN/PAXILLIN (via LD motif 4). Interacts with CCDC25 (via cytoplasmic region); initiating the ILK-PARVB cascade to induce cytoskeleton rearrangement and directional migration of cells. Interacts with IQGAP1; the interaction is required for localization of IQGAP1 to the cell cortex. Post-translationally, phosphorylation by PAK1 modulates ILK subcellular location by promoting its nuclear export. As to expression, highly expressed in lung, heart, kidney, liver, brain, spleen and skeletal muscle. Weakly expressed in testis.

The protein localises to the cell junction. It localises to the focal adhesion. The protein resides in the cell membrane. Its subcellular location is the cytoplasm. It is found in the myofibril. The protein localises to the sarcomere. It localises to the cell projection. The protein resides in the lamellipodium. Its subcellular location is the nucleus. It is found in the cytoskeleton. The protein localises to the microtubule organizing center. It localises to the centrosome. The protein resides in the cell cortex. In terms of biological role, scaffold protein which mediates protein-protein interactions during a range of cellular events including focal adhesion assembly, cell adhesion and cell migration. Regulates integrin-mediated signal transduction by contributing to inside-out integrin activation. Recruits PARVA and LIMS1/PITCH to form the heterotrimeric IPP (ILK-PINCH-PARVIN) complex which binds to F-actin via the C-terminal tail of LIMS1 and the N-terminal region of PARVA, promoting F-actin filament bundling, a process required to generate force for actin cytoskeleton reorganization and subsequent dynamic cell adhesion events such as cell spreading and migration. Binding to PARVA promotes effective assembly of ILK into focal adhesions while PARVA-bound ILK can simultaneously engage integrin-beta cytoplasmic tails to mediate cell adhesion. Plays a role with PARVG in promoting the cell adhesion and spreading of leukocytes. Acts as an upstream effector of both AKT1/PKB and GSK3. Mediates trafficking of caveolae to the cell surface in an ITGB1-dependent manner by promoting the recruitment of IQGAP1 to the cell cortex which cooperates with its effector DIAPH1 to locally stabilize microtubules and allow stable insertion of caveolae into the plasma membrane. Required for the maintenance of mitotic spindle integrity by promoting phosphorylation of TACC3 by AURKA. Associates with chromatin and may act as a negative regulator of transcription when located in the nucleus. The protein is Scaffold protein ILK of Mus musculus (Mouse).